Here is a 385-residue protein sequence, read N- to C-terminus: Putative UDP-N-acetylglucosamine 2-epimerase (385 aa).

The protein belongs to the UDP-N-acetylglucosamine 2-epimerase family.

It localises to the cytoplasm. It carries out the reaction UDP-N-acetyl-alpha-D-glucosamine = UDP-N-acetyl-alpha-D-mannosamine. The protein is Putative UDP-N-acetylglucosamine 2-epimerase of Clostridium acetobutylicum (strain ATCC 824 / DSM 792 / JCM 1419 / IAM 19013 / LMG 5710 / NBRC 13948 / NRRL B-527 / VKM B-1787 / 2291 / W).